Here is a 226-residue protein sequence, read N- to C-terminus: N-(5'-phosphoribosyl)anthranilate isomerase 2 (226 aa).

It belongs to the TrpF family.

The enzyme catalyses N-(5-phospho-beta-D-ribosyl)anthranilate = 1-(2-carboxyphenylamino)-1-deoxy-D-ribulose 5-phosphate. The protein operates within amino-acid biosynthesis; L-tryptophan biosynthesis; L-tryptophan from chorismate: step 3/5. This Methanosarcina mazei (strain ATCC BAA-159 / DSM 3647 / Goe1 / Go1 / JCM 11833 / OCM 88) (Methanosarcina frisia) protein is N-(5'-phosphoribosyl)anthranilate isomerase 2 (trpF2).